A 1376-amino-acid polypeptide reads, in one-letter code: MDRRSEAFKIPVPEVIPAGQILSTIEVSSHRTLFDFFKQIRSDDNGLYAAQFDVLLGTYCNTLTLVRFLELGLSVSCVCTKFPELNYVNDGTIQFEVQQPMIARDGPHPVDQPTHTYMMKHIEQRSLSAAFAIAAEALGLIGGTTLDGTQISSSLRVRAIQQLARNVQTVLDSFERGTADQLLRVLLEKAPPLTLLAPLQIYRDEGRLASRVNRAVLVSELKRRVIEDTFFLTKHERNRKELVVARLAELVNCTAPSVAVTRMTHSDTKGRPVDGVVVTTAGVRQRLLQGILTLEDMAADVPVTYGEMMITGTNLVTALVMGKAVRNLDDVAHHLLGMQRDQVRANEKLIKDYEDVPSTARVRADLVLVGDRLVFLEALEKRVYQATNVPYPLVGNLDLTFIIPLGIFKPATDRYSRHAGSFTPTPGQPDPRTYPPQTVYFFNKDGNLVQLSFDSAAGTVCHSSFLDVDSVLVAIRREPHELHCAFGAYVTLPPAGTLLDQMRRFFERWHMLMPARPRWTAEALMTIDQLLSPGNANLRLELHPAFDFFVAPADVVIPGPFDMPNVMPTVMAMPRLINGNIPLPLCPVEFRDSRGFELSVDRHRLNPATVLAVRGAFRDANYPMVFYILEAVIHGSERTFCALARLIIQCIVSYWRNTHQVAFVNNFYMIMYINAYLGNGELPEECTAIYRDLLEHVQALRRLVAEYTVPGEAVGGQGHDALNNVLLDPALLPPLIWDCDPILHRADMGRARAQELWVDGVDYAAIPWVEMAEVNFGNTGGHLVHNRPIRGENKRNPIVPHHDPEWSVLSKIYYYAVVPAFSRGNCCTMGVRYDRVYPLVQTVVIPDLGAEEIAPTSPSDPRHPLNPRHLVPNTLNILFHNARVAVDTDALLLLQEVVTNMAERTTPVLATAAPDAGTATAVTQEMRTFDGTLHHGILMMAYQRNDETLLEGTFFYPAPVNALFACPEHLGALPGLNAEVLEAARDVPPVPHFFGGNYYATVRQPVAQHAVQSRADENTLTYALMAGYFKLGPIALSHQFATGFHPGFAFTVVRQDRFLTENILFAEKASESYFMGQLQVNRHEAVGGVNFVLTQPRANVDLGVGFTAAYAAAALRTPVTDMGNLPQNLYLTRGTIPMLDGDADAYLRRVVNTGNRLGPQGPRPIFGQLMPATPAGVAHGQAAVCEFIVTPVSADLNYFRRPCNPRGRSAGPVYACDGEADAVDVMYDHTQGDPAYPSRATVNPWASQRNSYGDRLYNGKYNLNGASPVYSPCFKFFTPTEVEAKGRNMTQLIADVGASVAPSTSNTEIQFKRPHGSTDLVEDPCSLFQEAYPLLSSTDTALLRTPHIGEIGADEGHFAQYLIRDESPLKGCFPRI.

Belongs to the herpesviridae major capsid protein family. As to quaternary structure, homomultimer. Makes the hexons and eleven out of twelve pentons. Interacts with triplex proteins 1/TRX1 and 2/TRX2; adjacent capsomers are linked together in groups of three by triplexes, heterotrimeric complexes composed of one molecule of TRX1 and two molecules of TRX2. Interacts with scaffold protein; this interaction allows efficient MCP transport to the host nucleus. Interacts with capsid vertex component 2/CVC2. Interacts with the small capsomere-interacting protein/SCP.

Its subcellular location is the virion. The protein resides in the host nucleus. Functionally, self-assembles to form an icosahedral capsid with a T=16 symmetry, about 200 nm in diameter, and consisting of 150 hexons and 12 pentons (total of 162 capsomers). Hexons form the edges and faces of the capsid and are each composed of six MCP molecules. In contrast, one penton is found at each of the 12 vertices. Eleven of the pentons are MCP pentamers, while the last vertex is occupied by the portal complex. The capsid is surrounded by a layer of proteinaceous material designated the tegument which, in turn, is enclosed in an envelope of host cell-derived lipids containing virus-encoded glycoproteins. The sequence is that of Major capsid protein from Equus caballus (Horse).